The primary structure comprises 239 residues: tRNA (guanine-N(7)-)-methyltransferase (239 aa).

The S-adenosyl-L-methionine site is built by Glu-69, Glu-94, Asp-121, and Asp-144. The active site involves Asp-144. Position 148 (Lys-148) interacts with substrate. Residues 150–155 form an interaction with RNA region; the sequence is RHNKRR. Substrate is bound by residues Asp-180 and 217-220; that span reads TKFE.

Belongs to the class I-like SAM-binding methyltransferase superfamily. TrmB family. Monomer.

It catalyses the reaction guanosine(46) in tRNA + S-adenosyl-L-methionine = N(7)-methylguanosine(46) in tRNA + S-adenosyl-L-homocysteine. It participates in tRNA modification; N(7)-methylguanine-tRNA biosynthesis. In terms of biological role, catalyzes the formation of N(7)-methylguanine at position 46 (m7G46) in tRNA. In Photorhabdus laumondii subsp. laumondii (strain DSM 15139 / CIP 105565 / TT01) (Photorhabdus luminescens subsp. laumondii), this protein is tRNA (guanine-N(7)-)-methyltransferase.